The following is a 492-amino-acid chain: GTPase Obg (492 aa).

The Obg domain occupies P2–V159. One can recognise an OBG-type G domain in the interval A160–S340. GTP-binding positions include G166–S173, F191–V195, D212–G215, N292–D295, and S321–V323. The Mg(2+) site is built by S173 and T193. The region spanning P358–P438 is the OCT domain. Positions P441–T492 are disordered. Basic and acidic residues-rich tracts occupy residues T453–K469 and R476–T492.

The protein belongs to the TRAFAC class OBG-HflX-like GTPase superfamily. OBG GTPase family. Monomer. Mg(2+) serves as cofactor.

It localises to the cytoplasm. Its function is as follows. An essential GTPase which binds GTP, GDP and possibly (p)ppGpp with moderate affinity, with high nucleotide exchange rates and a fairly low GTP hydrolysis rate. Plays a role in control of the cell cycle, stress response, ribosome biogenesis and in those bacteria that undergo differentiation, in morphogenesis control. This Mycolicibacterium paratuberculosis (strain ATCC BAA-968 / K-10) (Mycobacterium paratuberculosis) protein is GTPase Obg.